A 393-amino-acid polypeptide reads, in one-letter code: MLKVIARRIDQFINSQSAGGVLLALSALVALVISNSPWRSYYQQFLQIPGSVKMGADWLLLSKPMLIWINDLWMAVFFFLVGLEIKRELLNGELASLKQAMLPAVAALGGMAVPALIYAAINWGEPVGLRGWGIPMATDIAFALGLLVLLGSRVPTSLKVFLTAVAIIDDLGAILVIAFFYTDNLSPTMLLAAGLGALVLLGLNRARVMAVGPYVVVGLVIWVCVLKSGIHATLAGVITALAIPLADGKGGSPLERAEHALQPWVAFLVLPVFAFANAGVSLQGVTLATLTQTVPLGIAFGLLIGKPIGVFGASWLLIRLTDAQLPDQCRWSQFFGVCVLCGVGFTMSLFIGSLAFEGADAAYEVQVKIGVLLGSLLSGAAGVALLLASRKAV.

11 helical membrane-spanning segments follow: residues 18–38 (AGGVLLALSALVALVISNSPW), 65–85 (MLIWINDLWMAVFFFLVGLEI), 101–121 (MLPAVAALGGMAVPALIYAAI), 131–151 (GWGIPMATDIAFALGLLVLLG), 160–180 (VFLTAVAIIDDLGAILVIAFF), 184–204 (NLSPTMLLAAGLGALVLLGLN), 210–230 (AVGPYVVVGLVIWVCVLKSGI), 260–280 (ALQPWVAFLVLPVFAFANAGV), 298–318 (IAFGLLIGKPIGVFGASWLLI), 334–354 (FFGVCVLCGVGFTMSLFIGSL), and 369–389 (IGVLLGSLLSGAAGVALLLAS).

The protein belongs to the NhaA Na(+)/H(+) (TC 2.A.33) antiporter family.

The protein resides in the cell inner membrane. It catalyses the reaction Na(+)(in) + 2 H(+)(out) = Na(+)(out) + 2 H(+)(in). Its function is as follows. Na(+)/H(+) antiporter that extrudes sodium in exchange for external protons. This chain is Na(+)/H(+) antiporter NhaA, found in Albidiferax ferrireducens (strain ATCC BAA-621 / DSM 15236 / T118) (Rhodoferax ferrireducens).